A 567-amino-acid polypeptide reads, in one-letter code: MSSRLGAVPATSGPTTFKQQRSTRIVGAKNSRTQCSIKDNSFQYTIPHDDSLSGSSSASSCEPVSDFPASFRKSTYWMKMRRIKPAATSHVEGSGGVSAKGKRKPRQEEDEDYREFPQKKHKLYGRKQRPKTQPNPKSQARRIRKEPPVYAAGSLEEQWYLEIVDKGSVSCPTCQAVGRKTIEGLKKHMENCKQEMFTCHHCGKQLRSLAGMKYHVMANHNSLPILKAGDEIDEPSERERLRTVLKRLGKLRCMRESCSSSFTSIMGYLYHVRKCGKGAAELEKMTLKCHHCGKPYRSKAGLAYHLRSEHGPISFFPESGQPECLKEMNLESKSGGRVQRRSAKIAVYHLQELASAELAKEWPKRKVLQDLVPDDRKLKYTRPGLPTFSQEVLHKWKTDIKKYHRIQCPNQGCEAVYSSVSGLKAHLGSCTLGNFVAGKYKCLLCQKEFVSESGVKYHINSVHAEDWFVVNPTTTKSFEKLMKIKQRQQEEEKRRQQHRSRRSLRRRQQPGIELPETELSLRVGKDQRRNNEELVVSASCKEPEQEPVPAQFQKVKPPKTNHKRGRK.

The tract at residues 1 to 32 (MSSRLGAVPATSGPTTFKQQRSTRIVGAKNSR) is disordered. Residues 12–23 (SGPTTFKQQRST) show a composition bias toward polar residues. Glycyl lysine isopeptide (Lys-Gly) (interchain with G-Cter in SUMO2) cross-links involve residues K18 and K84. The segment at 86–148 (AATSHVEGSG…QARRIRKEPP (63 aa)) is disordered. A compositionally biased stretch (basic residues) spans 119–130 (KKHKLYGRKQRP). The segment at 197–220 (FTCHHCGKQLRSLAGMKYHVMANH) adopts a C2H2-type 1 zinc-finger fold. Residue K227 forms a Glycyl lysine isopeptide (Lys-Gly) (interchain with G-Cter in SUMO2) linkage. Residues 287–310 (LKCHHCGKPYRSKAGLAYHLRSEH) form a C2H2-type 2 zinc finger. A Glycyl lysine isopeptide (Lys-Gly) (interchain with G-Cter in SUMO2) cross-link involves residue K333. Residues 406–430 (IQCPNQGCEAVYSSVSGLKAHLGSC) form a C2H2-type 3; atypical zinc finger. A C2H2-type 4 zinc finger spans residues 440-463 (YKCLLCQKEFVSESGVKYHINSVH). A disordered region spans residues 486–567 (QRQQEEEKRR…PKTNHKRGRK (82 aa)). The segment covering 495 to 508 (RQQHRSRRSLRRRQ) has biased composition (basic residues). Residues 523 to 532 (VGKDQRRNNE) are compositionally biased toward basic and acidic residues. Basic residues predominate over residues 556 to 567 (KPPKTNHKRGRK).

The protein belongs to the krueppel C2H2-type zinc-finger protein family.

It localises to the nucleus. May be involved in transcriptional regulation. The polypeptide is Zinc finger protein 512 (ZNF512) (Homo sapiens (Human)).